The chain runs to 310 residues: Tyrosine recombinase XerC (310 aa).

One can recognise a Core-binding (CB) domain in the interval 11-97 (NSLQKPLERF…SLRSFFDFLI (87 aa)). The Tyr recombinase domain occupies 118 to 298 (PLPKNLDVDE…DFQHLAQAYD (181 aa)). Residues Arg157, Lys181, His250, Arg253, and His276 contribute to the active site. Tyr285 (O-(3'-phospho-DNA)-tyrosine intermediate) is an active-site residue.

Belongs to the 'phage' integrase family. XerC subfamily. Forms a cyclic heterotetrameric complex composed of two molecules of XerC and two molecules of XerD.

The protein resides in the cytoplasm. Its function is as follows. Site-specific tyrosine recombinase, which acts by catalyzing the cutting and rejoining of the recombining DNA molecules. The XerC-XerD complex is essential to convert dimers of the bacterial chromosome into monomers to permit their segregation at cell division. It also contributes to the segregational stability of plasmids. The protein is Tyrosine recombinase XerC of Vibrio parahaemolyticus serotype O3:K6 (strain RIMD 2210633).